Here is a 107-residue protein sequence, read N- to C-terminus: MSHSHGNASSVNDPRQPSAAKPYIPRPVAPEDLPVDYSGFIAVILGVSGVMFRYKICSWLAIIFCAQSLANMRNLENDLKQISMAMMFAIMGLVTNYLGPNRPATKK.

The segment covering Met-1 to Arg-15 has biased composition (polar residues). Residues Met-1 to Pro-25 form a disordered region. Residues Ile-82–Leu-98 form a helical membrane-spanning segment.

The protein belongs to the Asterix family.

It localises to the membrane. The protein is Protein Asterix of Arabidopsis thaliana (Mouse-ear cress).